Here is a 305-residue protein sequence, read N- to C-terminus: Cytochrome c biogenesis protein CcsA (305 aa).

Transmembrane regions (helical) follow at residues 13–33 (IYFS…VYPV), 42–62 (KGII…WFYS), 70–90 (LYES…FIDI), 97–117 (WIGV…TLIL), 135–155 (WLIM…CGSL), 212–232 (YTIV…AVWA), 242–262 (WDPK…YIHI), and 276–296 (VASL…ILGI).

It belongs to the CcmF/CycK/Ccl1/NrfE/CcsA family. As to quaternary structure, may interact with Ccs1.

It is found in the plastid. It localises to the chloroplast thylakoid membrane. Required during biogenesis of c-type cytochromes (cytochrome c6 and cytochrome f) at the step of heme attachment. This chain is Cytochrome c biogenesis protein CcsA, found in Welwitschia mirabilis (Tree tumbo).